The primary structure comprises 336 residues: Holliday junction branch migration complex subunit RuvB (336 aa).

Residues 1–182 form a large ATPase domain (RuvB-L) region; it reads MKERIVNLET…FGMSFRMQFY (182 aa). ATP is bound by residues Leu-21, Arg-22, Gly-63, Lys-66, Thr-67, Ser-68, 129 to 131, Arg-172, Tyr-182, and Arg-219; that span reads EDF. Residue Thr-67 coordinates Mg(2+). The tract at residues 183–253 is small ATPAse domain (RuvB-S); it reads SPSELALIIK…ITLHALNELG (71 aa). The tract at residues 256 to 336 is head domain (RuvB-H); that stretch reads ELGFDEADLA…IPTLKSQTLF (81 aa). 2 residues coordinate DNA: Arg-310 and Arg-315.

The protein belongs to the RuvB family. Homohexamer. Forms an RuvA(8)-RuvB(12)-Holliday junction (HJ) complex. HJ DNA is sandwiched between 2 RuvA tetramers; dsDNA enters through RuvA and exits via RuvB. An RuvB hexamer assembles on each DNA strand where it exits the tetramer. Each RuvB hexamer is contacted by two RuvA subunits (via domain III) on 2 adjacent RuvB subunits; this complex drives branch migration. In the full resolvosome a probable DNA-RuvA(4)-RuvB(12)-RuvC(2) complex forms which resolves the HJ.

The protein resides in the cytoplasm. The enzyme catalyses ATP + H2O = ADP + phosphate + H(+). In terms of biological role, the RuvA-RuvB-RuvC complex processes Holliday junction (HJ) DNA during genetic recombination and DNA repair, while the RuvA-RuvB complex plays an important role in the rescue of blocked DNA replication forks via replication fork reversal (RFR). RuvA specifically binds to HJ cruciform DNA, conferring on it an open structure. The RuvB hexamer acts as an ATP-dependent pump, pulling dsDNA into and through the RuvAB complex. RuvB forms 2 homohexamers on either side of HJ DNA bound by 1 or 2 RuvA tetramers; 4 subunits per hexamer contact DNA at a time. Coordinated motions by a converter formed by DNA-disengaged RuvB subunits stimulates ATP hydrolysis and nucleotide exchange. Immobilization of the converter enables RuvB to convert the ATP-contained energy into a lever motion, pulling 2 nucleotides of DNA out of the RuvA tetramer per ATP hydrolyzed, thus driving DNA branch migration. The RuvB motors rotate together with the DNA substrate, which together with the progressing nucleotide cycle form the mechanistic basis for DNA recombination by continuous HJ branch migration. Branch migration allows RuvC to scan DNA until it finds its consensus sequence, where it cleaves and resolves cruciform DNA. This is Holliday junction branch migration complex subunit RuvB from Helicobacter pylori (strain G27).